A 407-amino-acid polypeptide reads, in one-letter code: Phosphopentomutase (407 aa).

Residues Asp-11, Asp-305, His-310, Asp-346, His-347, and His-358 each contribute to the Mn(2+) site.

The protein belongs to the phosphopentomutase family. Mn(2+) is required as a cofactor.

The protein resides in the cytoplasm. It catalyses the reaction 2-deoxy-alpha-D-ribose 1-phosphate = 2-deoxy-D-ribose 5-phosphate. It carries out the reaction alpha-D-ribose 1-phosphate = D-ribose 5-phosphate. Its pathway is carbohydrate degradation; 2-deoxy-D-ribose 1-phosphate degradation; D-glyceraldehyde 3-phosphate and acetaldehyde from 2-deoxy-alpha-D-ribose 1-phosphate: step 1/2. Functionally, isomerase that catalyzes the conversion of deoxy-ribose 1-phosphate (dRib-1-P) and ribose 1-phosphate (Rib-1-P) to deoxy-ribose 5-phosphate (dRib-5-P) and ribose 5-phosphate (Rib-5-P), respectively. This is Phosphopentomutase from Legionella pneumophila (strain Paris).